Here is a 630-residue protein sequence, read N- to C-terminus: Adenine DNA glycosylase (630 aa).

Positions 54–72 are enriched in basic and acidic residues; that stretch reads MRKCREKKEAEREAEREAE. Residues 54–123 are disordered; sequence MRKCREKKEA…ALGGDIEDLF (70 aa). The span at 73–123 shows a compositional bias: acidic residues; the sequence is REAEEEEKAEEAEAEADKEEAEEESEEEEEEEEEEAEAEEEALGGDIEDLF. The active-site Proton donor/acceptor is the Glu-168. Cys-341, Cys-348, Cys-351, and Cys-357 together coordinate [4Fe-4S] cluster. A Nudix hydrolase domain is found at 383–536; it reads PRHDFCCVCV…RKVPPFRLQH (154 aa). The Nudix box signature appears at 427-451; the sequence is VILNEEADSATRRNAINVYLKEAFR.

This sequence belongs to the Nth/MutY family. The cofactor is [4Fe-4S] cluster.

The protein resides in the nucleus. The enzyme catalyses Hydrolyzes free adenine bases from 7,8-dihydro-8-oxoguanine:adenine mismatched double-stranded DNA, leaving an apurinic site.. In terms of biological role, involved in oxidative DNA damage repair. Initiates repair of A*oxoG to C*G by removing the inappropriately paired adenine base from the DNA backbone. Possesses both adenine and 2-OH-A DNA glycosylase activities. The polypeptide is Adenine DNA glycosylase (MYH) (Arabidopsis thaliana (Mouse-ear cress)).